A 625-amino-acid chain; its full sequence is 1-deoxy-D-xylulose-5-phosphate synthase (625 aa).

Residues His-80 and 121–123 contribute to the thiamine diphosphate site; that span reads GHS. Asp-152 contacts Mg(2+). Thiamine diphosphate-binding positions include 153–154, Asn-181, Tyr-290, and Glu-371; that span reads GA. Position 181 (Asn-181) interacts with Mg(2+).

Belongs to the transketolase family. DXPS subfamily. As to quaternary structure, homodimer. Mg(2+) serves as cofactor. Requires thiamine diphosphate as cofactor.

It carries out the reaction D-glyceraldehyde 3-phosphate + pyruvate + H(+) = 1-deoxy-D-xylulose 5-phosphate + CO2. Its pathway is metabolic intermediate biosynthesis; 1-deoxy-D-xylulose 5-phosphate biosynthesis; 1-deoxy-D-xylulose 5-phosphate from D-glyceraldehyde 3-phosphate and pyruvate: step 1/1. In terms of biological role, catalyzes the acyloin condensation reaction between C atoms 2 and 3 of pyruvate and glyceraldehyde 3-phosphate to yield 1-deoxy-D-xylulose-5-phosphate (DXP). In Haemophilus influenzae (strain 86-028NP), this protein is 1-deoxy-D-xylulose-5-phosphate synthase.